Here is a 103-residue protein sequence, read N- to C-terminus: MTKSELIEILARRQAHLKSDDVDLAVKSLLEMMGQALSDGDRIEIRGFGSFSLHYRPPRLGRNPKTGESVALPGKHVPHFKPGKELRERVSSVVPVDMVDAAD.

Positions 62–81 (RNPKTGESVALPGKHVPHFK) are disordered.

It belongs to the bacterial histone-like protein family. Heterodimer of an alpha and a beta chain.

Functionally, this protein is one of the two subunits of integration host factor, a specific DNA-binding protein that functions in genetic recombination as well as in transcriptional and translational control. This Xanthomonas campestris pv. campestris (strain B100) protein is Integration host factor subunit beta.